The primary structure comprises 347 residues: WAT1-related protein At4g15540 (347 aa).

The next 10 membrane-spanning stretches (helical) occupy residues 15-35, 47-67, 73-93, 108-128, 139-159, 178-198, 210-230, 243-263, 276-296, and 299-319; these read VVPFTAMIAIECTTVGSSILY, VFVFYAYVGATLVLLLLSLIF, LPTAKSSLFFKIFLLALLGLT, TLSSAISNLTPAFTFILAIFF, ATQAKIIGTIVSISGALVIVL, WIIGGLLLGLQFLLLSVWFIL, IAVVFCYNLCATLISGTVCLL, GFSLASVIYSGLFDTSLGSVI, ISLFKPLSIAIAVAMAAIFLG, and LHLGSVIGSVILSFGFYTVIW. Positions 30-158 constitute an EamA 1 domain; it reads GSSILYKAAT…VSISGALVIV (129 aa). In terms of domain architecture, EamA 2 spans 216 to 317; that stretch reads YNLCATLISG…VILSFGFYTV (102 aa).

The protein belongs to the drug/metabolite transporter (DMT) superfamily. Plant drug/metabolite exporter (P-DME) (TC 2.A.7.4) family.

The protein localises to the membrane. The chain is WAT1-related protein At4g15540 from Arabidopsis thaliana (Mouse-ear cress).